The chain runs to 284 residues: Bifunctional protein FolD (284 aa).

NADP(+) is bound by residues 166 to 168 (GRS) and S191.

The protein belongs to the tetrahydrofolate dehydrogenase/cyclohydrolase family. In terms of assembly, homodimer.

The enzyme catalyses (6R)-5,10-methylene-5,6,7,8-tetrahydrofolate + NADP(+) = (6R)-5,10-methenyltetrahydrofolate + NADPH. The catalysed reaction is (6R)-5,10-methenyltetrahydrofolate + H2O = (6R)-10-formyltetrahydrofolate + H(+). It participates in one-carbon metabolism; tetrahydrofolate interconversion. Its function is as follows. Catalyzes the oxidation of 5,10-methylenetetrahydrofolate to 5,10-methenyltetrahydrofolate and then the hydrolysis of 5,10-methenyltetrahydrofolate to 10-formyltetrahydrofolate. The chain is Bifunctional protein FolD from Delftia acidovorans (strain DSM 14801 / SPH-1).